The sequence spans 565 residues: Anaphase-promoting complex subunit 7 (565 aa).

TPR repeat units lie at residues 101–134, 169–202, 203–236, 237–270, 339–372, 373–406, 407–439, 442–474, 475–508, and 509–531; these read EIEVKYKMAECYTMLKLDKDAIAVLDGIPSRQRT, LDAILGLLSLSVKGAEVASMTMNVIQTVPNLDWL, SVWIKAYAFVHTGDNSRAINTICSLEKKSLLRDN, VDLLGSLADLYFRAGDSKNSVLKFEQAQMLDPYL, VQALLLKGAALRNMGRVQEAIIHFREAIRLAPCR, LDCYEGLIECYLASNSIREAMVMANNVYKTLGAN, AQTLTLLATVCLEDPVTQEKAKTLLDKALAQRP, VKAVVKKAELLSREQKYEDGIALLRNALANQSD, CVLHRILGDFLVAVNEYQEAMDQYSIALSLDPND, and QKSLEGMQKMEKEESPTDATQEE. Lys229 carries the post-translational modification N6-acetyllysine. The span at 513–523 shows a compositional bias: basic and acidic residues; it reads EGMQKMEKEES. Residues 513–565 form a disordered region; the sequence is EGMQKMEKEESPTDATQEEDVDDMEGSGEEGDLEGSDSEAAQWADQEQWFGMQ. The span at 528-549 shows a compositional bias: acidic residues; sequence TQEEDVDDMEGSGEEGDLEGSD.

It belongs to the APC7 family. V-shaped homodimer. The mammalian APC/C is composed at least of 14 distinct subunits ANAPC1, ANAPC2, CDC27/APC3, ANAPC4, ANAPC5, CDC16/APC6, ANAPC7, CDC23/APC8, ANAPC10, ANAPC11, CDC26/APC12, ANAPC13, ANAPC15 and ANAPC16 that assemble into a complex of at least 19 chains with a combined molecular mass of around 1.2 MDa; APC/C interacts with FZR1 and FBXO5.

It is found in the cytoplasm. Its subcellular location is the cytoskeleton. It localises to the nucleus. The protein resides in the spindle. Its pathway is protein modification; protein ubiquitination. Component of the anaphase promoting complex/cyclosome (APC/C), a cell cycle-regulated E3 ubiquitin ligase that controls progression through mitosis and the G1 phase of the cell cycle. The APC/C complex acts by mediating ubiquitination and subsequent degradation of target proteins: it mainly mediates the formation of 'Lys-11'-linked polyubiquitin chains and, to a lower extent, the formation of 'Lys-48'- and 'Lys-63'-linked polyubiquitin chains. The APC/C complex catalyzes assembly of branched 'Lys-11'-/'Lys-48'-linked branched ubiquitin chains on target proteins. APC7 is not required for the assembly of the APC/C complex, but has an enzyme-substrate adapter activity mediating the processive ubiquitination of specific substrates. Involved in brain development through the specific ubiquitination and clearance of MKI67 from constitutive heterochromatin after neuronal progenitors exit mitosis. The chain is Anaphase-promoting complex subunit 7 (Anapc7) from Mus musculus (Mouse).